An 802-amino-acid polypeptide reads, in one-letter code: Phenylalanine--tRNA ligase beta subunit (802 aa).

Positions 38–149 (KSSLKPFVIA…ADAPVGTSFA (112 aa)) constitute a tRNA-binding domain. In terms of domain architecture, B5 spans 399–474 (HKPKIVSFPI…RIHGVDNIAP (76 aa)). Positions 452, 458, 461, and 462 each coordinate Mg(2+). Residues 708 to 801 (SAFQAVKRDF…VGKQTGGVLR (94 aa)) enclose the FDX-ACB domain.

It belongs to the phenylalanyl-tRNA synthetase beta subunit family. Type 1 subfamily. As to quaternary structure, tetramer of two alpha and two beta subunits. The cofactor is Mg(2+).

The protein localises to the cytoplasm. It catalyses the reaction tRNA(Phe) + L-phenylalanine + ATP = L-phenylalanyl-tRNA(Phe) + AMP + diphosphate + H(+). The protein is Phenylalanine--tRNA ligase beta subunit of Mesorhizobium japonicum (strain LMG 29417 / CECT 9101 / MAFF 303099) (Mesorhizobium loti (strain MAFF 303099)).